The sequence spans 500 residues: Probable cytosol aminopeptidase (500 aa).

Lysine 261 and aspartate 266 together coordinate Mn(2+). The active site involves lysine 273. Residues aspartate 284, aspartate 343, and glutamate 345 each coordinate Mn(2+). Residue arginine 347 is part of the active site.

The protein belongs to the peptidase M17 family. Mn(2+) serves as cofactor.

It is found in the cytoplasm. The catalysed reaction is Release of an N-terminal amino acid, Xaa-|-Yaa-, in which Xaa is preferably Leu, but may be other amino acids including Pro although not Arg or Lys, and Yaa may be Pro. Amino acid amides and methyl esters are also readily hydrolyzed, but rates on arylamides are exceedingly low.. The enzyme catalyses Release of an N-terminal amino acid, preferentially leucine, but not glutamic or aspartic acids.. Its function is as follows. Presumably involved in the processing and regular turnover of intracellular proteins. Catalyzes the removal of unsubstituted N-terminal amino acids from various peptides. The protein is Probable cytosol aminopeptidase of Wolbachia pipientis wMel.